The following is a 452-amino-acid chain: Tripartite motif-containing protein 49C (452 aa).

An RING-type zinc finger spans residues 15–56 (CPLCMNYFIDPVTIDCGHSFCRPCFYLNWQDIPFLVQCSECT). A B box-type zinc finger spans residues 88–129 (SEEQMCGTHRETKKIFCEVDRSLLCLLCSSSQEHRYHRHRPI). Zn(2+)-binding residues include Cys93, His96, Cys115, and His121. The B30.2/SPRY domain maps to 269–452 (ELSAGPITGL…LRPIFCCIHF (184 aa)).

The polypeptide is Tripartite motif-containing protein 49C (TRIM49C) (Homo sapiens (Human)).